A 53-amino-acid chain; its full sequence is Small ribosomal subunit protein uS14 (53 aa).

Cys-17, Cys-20, Cys-36, and Cys-39 together coordinate Zn(2+).

The protein belongs to the universal ribosomal protein uS14 family. Zinc-binding uS14 subfamily. In terms of assembly, part of the 30S ribosomal subunit. It depends on Zn(2+) as a cofactor.

Functionally, binds 16S rRNA, required for the assembly of 30S particles. The protein is Small ribosomal subunit protein uS14 of Methanococcus maripaludis (strain DSM 14266 / JCM 13030 / NBRC 101832 / S2 / LL).